A 269-amino-acid chain; its full sequence is Glutamate racemase (269 aa).

Substrate-binding positions include 7-8 (DS) and 39-40 (YG). Catalysis depends on Cys-70, which acts as the Proton donor/acceptor. 71–72 (NT) lines the substrate pocket. The Proton donor/acceptor role is filled by Cys-194. 195 to 196 (TH) contacts substrate.

It belongs to the aspartate/glutamate racemases family.

It catalyses the reaction L-glutamate = D-glutamate. It functions in the pathway cell wall biogenesis; peptidoglycan biosynthesis. Functionally, provides the (R)-glutamate required for cell wall biosynthesis. This Roseobacter denitrificans (strain ATCC 33942 / OCh 114) (Erythrobacter sp. (strain OCh 114)) protein is Glutamate racemase.